Here is a 475-residue protein sequence, read N- to C-terminus: Sulfate adenylyltransferase subunit 1 (475 aa).

A tr-type G domain is found at 25 to 239; the sequence is KSLLRFLTCG…EVLETVEIQR (215 aa). The tract at residues 34–41 is G1; sequence GSVDDGKS. A GTP-binding site is contributed by 34–41; it reads GSVDDGKS. A G2 region spans residues 92-96; it reads GITID. A G3 region spans residues 113 to 116; sequence DTPG. GTP-binding positions include 113–117 and 168–171; these read DTPGH and NKMD. The interval 168 to 171 is G4; that stretch reads NKMD. The G5 stretch occupies residues 206–208; sequence SAL.

The protein belongs to the TRAFAC class translation factor GTPase superfamily. Classic translation factor GTPase family. CysN/NodQ subfamily. In terms of assembly, heterodimer composed of CysD, the smaller subunit, and CysN.

It carries out the reaction sulfate + ATP + H(+) = adenosine 5'-phosphosulfate + diphosphate. The protein operates within sulfur metabolism; hydrogen sulfide biosynthesis; sulfite from sulfate: step 1/3. With CysD forms the ATP sulfurylase (ATPS) that catalyzes the adenylation of sulfate producing adenosine 5'-phosphosulfate (APS) and diphosphate, the first enzymatic step in sulfur assimilation pathway. APS synthesis involves the formation of a high-energy phosphoric-sulfuric acid anhydride bond driven by GTP hydrolysis by CysN coupled to ATP hydrolysis by CysD. The chain is Sulfate adenylyltransferase subunit 1 from Escherichia coli (strain UTI89 / UPEC).